Reading from the N-terminus, the 210-residue chain is NEDD4 family-interacting protein 1-like (210 aa).

A disordered region spans residues 1–31; that stretch reads MAEPSGRYQQLPCEEEPEAGPQVAADAPPPY. Residues 1-105 lie on the Cytoplasmic side of the membrane; the sequence is MAEPSGRYQQ…ADQLRIGNDG (105 aa). 2 short sequence motifs (PPxY motif) span residues 30-33 and 53-56; these read PYSS and PPSY. The chain crosses the membrane as a helical span at residues 106 to 126; it reads IFMLTFFMAFLFNWIGFFLSF. At 127–132 the chain is on the extracellular side; sequence CLTTSA. Residues 133–153 form a helical membrane-spanning segment; that stretch reads AGRYGAISGFGLSLIKWILIV. Over 154 to 161 the chain is Cytoplasmic; that stretch reads RFSTYFPG. Residues 162–182 form a helical membrane-spanning segment; the sequence is YFDGQYWLWWVFLVLGFLLFL. Residues 183 to 210 are Extracellular-facing; sequence RGFINYAKIRKMADSFSTLPRTRVLFIY.

The protein resides in the golgi apparatus membrane. May play a role in Golgi structure maintenance. This Danio rerio (Zebrafish) protein is NEDD4 family-interacting protein 1-like (ndfip1l).